The chain runs to 828 residues: Periplasmic nitrate reductase (828 aa).

Positions 1–31 (MKLSRRSFMKANAVAAAAAAAGLSVPGVARA) form a signal peptide, tat-type signal. The 4Fe-4S Mo/W bis-MGD-type domain occupies 39 to 95 (IKWDKAPCRFCGTGCGVLVGTQQGRVVACQGDPDAPVNRGLNCIKGYFLPKIMYGKD). [4Fe-4S] cluster is bound by residues cysteine 46, cysteine 49, cysteine 53, and cysteine 81. Mo-bis(molybdopterin guanine dinucleotide) contacts are provided by residues lysine 83, glutamine 150, asparagine 175, cysteine 179, 212 to 219 (WGANMAEM), 243 to 247 (STYQH), 262 to 264 (QSD), methionine 372, glutamine 376, asparagine 482, 508 to 509 (SD), lysine 531, aspartate 558, and 718 to 727 (TGRVLEHWHT). Phenylalanine 794 contacts substrate. Residues asparagine 802 and lysine 819 each coordinate Mo-bis(molybdopterin guanine dinucleotide).

The protein belongs to the prokaryotic molybdopterin-containing oxidoreductase family. NasA/NapA/NarB subfamily. Component of the periplasmic nitrate reductase NapAB complex composed of NapA and NapB. The cofactor is [4Fe-4S] cluster. It depends on Mo-bis(molybdopterin guanine dinucleotide) as a cofactor. In terms of processing, predicted to be exported by the Tat system. The position of the signal peptide cleavage has not been experimentally proven.

The protein resides in the periplasm. The catalysed reaction is 2 Fe(II)-[cytochrome] + nitrate + 2 H(+) = 2 Fe(III)-[cytochrome] + nitrite + H2O. In terms of biological role, catalytic subunit of the periplasmic nitrate reductase complex NapAB. Receives electrons from NapB and catalyzes the reduction of nitrate to nitrite. This chain is Periplasmic nitrate reductase, found in Shigella flexneri.